The chain runs to 105 residues: Large ribosomal subunit protein eL36 (105 aa).

Residues methionine 1–serine 36 form a disordered region. A compositionally biased stretch (basic residues) spans arginine 27–serine 36.

It belongs to the eukaryotic ribosomal protein eL36 family. In terms of assembly, component of the large ribosomal subunit (LSU).

It is found in the cytoplasm. Its function is as follows. Component of the ribosome, a large ribonucleoprotein complex responsible for the synthesis of proteins in the cell. The small ribosomal subunit (SSU) binds messenger RNAs (mRNAs) and translates the encoded message by selecting cognate aminoacyl-transfer RNA (tRNA) molecules. The large subunit (LSU) contains the ribosomal catalytic site termed the peptidyl transferase center (PTC), which catalyzes the formation of peptide bonds, thereby polymerizing the amino acids delivered by tRNAs into a polypeptide chain. The nascent polypeptides leave the ribosome through a tunnel in the LSU and interact with protein factors that function in enzymatic processing, targeting, and the membrane insertion of nascent chains at the exit of the ribosomal tunnel. In Emericella nidulans (strain FGSC A4 / ATCC 38163 / CBS 112.46 / NRRL 194 / M139) (Aspergillus nidulans), this protein is Large ribosomal subunit protein eL36.